The primary structure comprises 253 residues: MLKTRLIPCLDVADGRVVKGVNFVGLRDAGDPVEAARAYDAAGADEICFLDIHATHENRGTMFDMVRRTAEQCFVPLTVGGGVRTKDDVRALLLAGADKVSFNSAAVANPDVIAEAADQFGSQCIVCAIDAKSVAPGKWEIFTHGGRRETGIDAVEFARLVTAKGAGEILLTSMDRDGTKSGFNLEMTRAISDAVNVPVIASGGVGTLDHLVDGVTKGGASAVLAASIFHFGEYTVQEAKEHMIANGIPMRLQ.

Catalysis depends on residues Asp11 and Asp130.

Belongs to the HisA/HisF family. In terms of assembly, heterodimer of HisH and HisF.

The protein resides in the cytoplasm. It carries out the reaction 5-[(5-phospho-1-deoxy-D-ribulos-1-ylimino)methylamino]-1-(5-phospho-beta-D-ribosyl)imidazole-4-carboxamide + L-glutamine = D-erythro-1-(imidazol-4-yl)glycerol 3-phosphate + 5-amino-1-(5-phospho-beta-D-ribosyl)imidazole-4-carboxamide + L-glutamate + H(+). Its pathway is amino-acid biosynthesis; L-histidine biosynthesis; L-histidine from 5-phospho-alpha-D-ribose 1-diphosphate: step 5/9. In terms of biological role, IGPS catalyzes the conversion of PRFAR and glutamine to IGP, AICAR and glutamate. The HisF subunit catalyzes the cyclization activity that produces IGP and AICAR from PRFAR using the ammonia provided by the HisH subunit. This is Imidazole glycerol phosphate synthase subunit HisF from Ruegeria sp. (strain TM1040) (Silicibacter sp.).